The primary structure comprises 334 residues: Protein-methionine-sulfoxide reductase catalytic subunit MsrP (334 aa).

The tat-type signal signal peptide spans 1-44 (MKKNQFLKESDVTAESVFFMKRRQVLKALGISAAALSLPHAAHA). Mo-molybdopterin contacts are provided by residues Asn88, 91 to 92 (YE), Cys146, Thr181, Asn233, Arg238, and 249 to 251 (GIK).

Belongs to the MsrP family. As to quaternary structure, heterodimer of a catalytic subunit (MsrP) and a heme-binding subunit (MsrQ). Mo-molybdopterin is required as a cofactor. In terms of processing, predicted to be exported by the Tat system. The position of the signal peptide cleavage has not been experimentally proven.

The protein resides in the periplasm. The catalysed reaction is L-methionyl-[protein] + a quinone + H2O = L-methionyl-(S)-S-oxide-[protein] + a quinol. It catalyses the reaction L-methionyl-[protein] + a quinone + H2O = L-methionyl-(R)-S-oxide-[protein] + a quinol. Its function is as follows. Part of the MsrPQ system that repairs oxidized periplasmic proteins containing methionine sulfoxide residues (Met-O), using respiratory chain electrons. Thus protects these proteins from oxidative-stress damage caused by reactive species of oxygen and chlorine generated by the host defense mechanisms. MsrPQ is essential for the maintenance of envelope integrity under bleach stress, rescuing a wide series of structurally unrelated periplasmic proteins from methionine oxidation, including the primary periplasmic chaperone SurA and the lipoprotein Pal. The catalytic subunit MsrP is non-stereospecific, being able to reduce both (R-) and (S-) diastereoisomers of methionine sulfoxide. The protein is Protein-methionine-sulfoxide reductase catalytic subunit MsrP of Escherichia coli O81 (strain ED1a).